A 258-amino-acid chain; its full sequence is Phosphate import ATP-binding protein PstB 1 (258 aa).

Positions 5 to 247 (LDLTDVNIYY…EKIFSNPNQK (243 aa)) constitute an ABC transporter domain. Residue 37 to 44 (GPSGCGKT) participates in ATP binding.

It belongs to the ABC transporter superfamily. Phosphate importer (TC 3.A.1.7) family. In terms of assembly, the complex is composed of two ATP-binding proteins (PstB), two transmembrane proteins (PstC and PstA) and a solute-binding protein (PstS).

It localises to the cell membrane. The catalysed reaction is phosphate(out) + ATP + H2O = ADP + 2 phosphate(in) + H(+). Part of the ABC transporter complex PstSACB involved in phosphate import. Responsible for energy coupling to the transport system. This Mycobacterium tuberculosis (strain CDC 1551 / Oshkosh) protein is Phosphate import ATP-binding protein PstB 1.